Here is a 217-residue protein sequence, read N- to C-terminus: Large ribosomal subunit protein uL1 (217 aa).

It belongs to the universal ribosomal protein uL1 family.

In Spodoptera frugiperda (Fall armyworm), this protein is Large ribosomal subunit protein uL1 (RpL10A).